The following is a 128-amino-acid chain: uncharacterized protein (128 aa).

It is found in the mitochondrion. This is an uncharacterized protein from Saccharomyces cerevisiae (strain ATCC 204508 / S288c) (Baker's yeast).